The chain runs to 674 residues: MTTASSDPLLQPFTLKHLVLKNRVMSTSHASRLTRDEFPQEVYQRYHEEKAKGGLALTMFGGSSNVSLDSPNTFQQINLSADAVVPHLRRFSDRIHTHGAALMCQITHLGRRGDAYTEPWLPMIAPSPVRETLHRAMPQAIHDADIKRVIRDFGLAAKRCRDGGLDGIETHAGGHLIGQFMDPTVNLRTDKYGGSTANRVRFAIEVHEEIRKQVGDDFVVGFRFALEDGCSFEEGLEMSRILQGTGLFDFFNVTFGRMDTKMALAVNSMPGMFVPSAPWLPKAAAFKRAVDLPVFHAAKIADLATARYAIREGLLDMVGMTRAHIAEPHLVKLVEAGKEDEARPCVGASFCRNFRATCIHNPATSRETYLTHDIPKAAQTKRVLIVGAGPAGLEAARICATRGHDVTVLEANSTAGGQLLLAATGSWRRDLIGIVDWRVSALERLSVDVRYNHYAELSDVLDHGADVVIIATGGLPNLDALPGAEHCKSVFDALTETPPREGSVIVYDGTGRHNAYLCAERYVDAGLDVSLALIDSMPAQETGGRGDDQVWMRNIARWDVPVRTNIELIEVTASSNGKRRAVFQHHLTNERVELEADHVVVERGMLAVEDLFEAARMYSANDGYTDLEAFATGKPQPGHEAEEGQFHLYRIGDASASRDIHTAIYDAYRLCLAL.

2 residues coordinate FMN: G62 and Q105. H175 (proton donor) is an active-site residue. Positions 223 and 299 each coordinate FMN. Residues C345, C351, and C358 each contribute to the [4Fe-4S] cluster site. Residues A391, Q418, and R428 each contribute to the FAD site.

It in the N-terminal section; belongs to the NADH:flavin oxidoreductase/NADH oxidase family. It depends on [4Fe-4S] cluster as a cofactor. FAD is required as a cofactor. Requires FMN as cofactor.

The enzyme catalyses 3-phenylpropanoate + NAD(+) = (E)-cinnamate + NADH + H(+). It carries out the reaction N-methyl-L-proline + NAD(+) + H2O = L-proline + formaldehyde + NADH + H(+). Functionally, a member of the 2-enoate reductase subfamily of old yellow enzymes (OYE) able to reduce alpha/beta alkenes near electron-withdrawing groups as well as perform oxidative demethylation chemistry. Prefers NADH over NADPH as cosubstrate. May play a role in osmotic stress response in situ. The protein is Multifunctional alkene reductase/demethylase OYE of Caballeronia cordobensis (Burkholderia cordobensis).